A 338-amino-acid chain; its full sequence is S-adenosylmethionine:tRNA ribosyltransferase-isomerase (338 aa).

The protein belongs to the QueA family. Monomer.

It is found in the cytoplasm. It catalyses the reaction 7-aminomethyl-7-carbaguanosine(34) in tRNA + S-adenosyl-L-methionine = epoxyqueuosine(34) in tRNA + adenine + L-methionine + 2 H(+). It functions in the pathway tRNA modification; tRNA-queuosine biosynthesis. Transfers and isomerizes the ribose moiety from AdoMet to the 7-aminomethyl group of 7-deazaguanine (preQ1-tRNA) to give epoxyqueuosine (oQ-tRNA). This Francisella tularensis subsp. mediasiatica (strain FSC147) protein is S-adenosylmethionine:tRNA ribosyltransferase-isomerase.